Here is a 285-residue protein sequence, read N- to C-terminus: Zinc transporter ZupT (285 aa).

3 helical membrane passes run 13 to 33 (AFLL…IAFF), 41 to 61 (FLCV…MIEM), and 80 to 100 (WITV…DKFV). The Fe(2+) site is built by Asn-153 and Glu-156. Residue Glu-156 coordinates Zn(2+). Residues 160-180 (TFVSALEGASLAIPITIAIAI) form a helical membrane-spanning segment. His-181 is a Zn(2+) binding site. Residues Asn-182, Glu-185, and Glu-214 each coordinate Fe(2+). Glu-185 contacts Zn(2+). Transmembrane regions (helical) follow at residues 204-224 (FLYS…GYTL), 228-248 (IFND…MVFI), and 265-285 (LAIY…LLFI).

The protein belongs to the ZIP transporter (TC 2.A.5) family. ZupT subfamily.

The protein localises to the cell membrane. It catalyses the reaction Zn(2+)(in) = Zn(2+)(out). Its function is as follows. Mediates zinc uptake. May also transport other divalent cations. The polypeptide is Zinc transporter ZupT (Clostridium perfringens (strain 13 / Type A)).